Here is a 156-residue protein sequence, read N- to C-terminus: Probable cyclic pyranopterin monophosphate synthase (156 aa).

Substrate contacts are provided by residues 74–76 (LCH) and 110–111 (ME). The active site involves D125.

Belongs to the MoaC family. In terms of assembly, homohexamer; trimer of dimers.

The enzyme catalyses (8S)-3',8-cyclo-7,8-dihydroguanosine 5'-triphosphate = cyclic pyranopterin phosphate + diphosphate. It functions in the pathway cofactor biosynthesis; molybdopterin biosynthesis. Catalyzes the conversion of (8S)-3',8-cyclo-7,8-dihydroguanosine 5'-triphosphate to cyclic pyranopterin monophosphate (cPMP). This chain is Probable cyclic pyranopterin monophosphate synthase, found in Thermococcus kodakarensis (strain ATCC BAA-918 / JCM 12380 / KOD1) (Pyrococcus kodakaraensis (strain KOD1)).